A 289-amino-acid polypeptide reads, in one-letter code: Orotidine 5'-phosphate decarboxylase (289 aa).

Catalysis depends on Lys-97, which acts as the Proton donor.

This sequence belongs to the OMP decarboxylase family. Type 2 subfamily.

The enzyme catalyses orotidine 5'-phosphate + H(+) = UMP + CO2. It participates in pyrimidine metabolism; UMP biosynthesis via de novo pathway; UMP from orotate: step 2/2. The chain is Orotidine 5'-phosphate decarboxylase from Petrotoga mobilis (strain DSM 10674 / SJ95).